A 257-amino-acid polypeptide reads, in one-letter code: Imidazole glycerol phosphate synthase subunit HisF (257 aa).

Active-site residues include Asp-11 and Asp-130.

It belongs to the HisA/HisF family. As to quaternary structure, heterodimer of HisH and HisF.

The protein localises to the cytoplasm. The catalysed reaction is 5-[(5-phospho-1-deoxy-D-ribulos-1-ylimino)methylamino]-1-(5-phospho-beta-D-ribosyl)imidazole-4-carboxamide + L-glutamine = D-erythro-1-(imidazol-4-yl)glycerol 3-phosphate + 5-amino-1-(5-phospho-beta-D-ribosyl)imidazole-4-carboxamide + L-glutamate + H(+). It functions in the pathway amino-acid biosynthesis; L-histidine biosynthesis; L-histidine from 5-phospho-alpha-D-ribose 1-diphosphate: step 5/9. Functionally, IGPS catalyzes the conversion of PRFAR and glutamine to IGP, AICAR and glutamate. The HisF subunit catalyzes the cyclization activity that produces IGP and AICAR from PRFAR using the ammonia provided by the HisH subunit. The sequence is that of Imidazole glycerol phosphate synthase subunit HisF from Shewanella woodyi (strain ATCC 51908 / MS32).